We begin with the raw amino-acid sequence, 317 residues long: Tyrosine--tRNA ligase (317 aa).

Position 33 (Tyr33) interacts with L-tyrosine. Residues 38-46 (PSGKIHMGH) carry the 'HIGH' region motif. L-tyrosine-binding residues include Tyr155, Gln159, Asp162, and Gln177. A 'KMSKS' region motif is present at residues 211 to 215 (KMASS). Residue Ser214 coordinates ATP.

The protein belongs to the class-I aminoacyl-tRNA synthetase family. TyrS type 3 subfamily. In terms of assembly, homodimer.

The protein localises to the cytoplasm. The catalysed reaction is tRNA(Tyr) + L-tyrosine + ATP = L-tyrosyl-tRNA(Tyr) + AMP + diphosphate + H(+). Catalyzes the attachment of tyrosine to tRNA(Tyr) in a two-step reaction: tyrosine is first activated by ATP to form Tyr-AMP and then transferred to the acceptor end of tRNA(Tyr). This chain is Tyrosine--tRNA ligase, found in Methanosarcina acetivorans (strain ATCC 35395 / DSM 2834 / JCM 12185 / C2A).